Here is a 623-residue protein sequence, read N- to C-terminus: Prothrombin (623 aa).

The first 24 residues, 1–24 (MAHVRGLQLPGCLALAALCTLVHS), serve as a signal peptide directing secretion. Positions 25 to 43 (QHVFLAPQQALSLLQRVRR) are excised as a propeptide. The region spanning 44–90 (ANSVFLEEVRKGNLERECVEETCSYEEAFEALESSTATDVFWAKYTA) is the Gla domain. Residues E50, E51, E58, E60, E63, E64, E69, E70, E73, and E76 each carry the 4-carboxyglutamate modification. A disulfide bridge connects residues C61 and C66. Intrachain disulfides connect C91/C104, C109/C187, C130/C170, C158/C182, C214/C292, C235/C275, C263/C287, C337/C483, C392/C408, C537/C551, and C565/C595. Kringle domains follow at residues 108–187 (NCAE…IPVC) and 213–292 (QCVP…LNYC). 2 N-linked (GlcNAc...) asparagine glycosylation sites follow: N122 and N144. Residues 365–619 (IVEGSDAEIG…LKKWIQKVID (255 aa)) enclose the Peptidase S1 domain. H407 serves as the catalytic Charge relay system. Residue N417 is glycosylated (N-linked (GlcNAc...) asparagine). The active-site Charge relay system is the D463. The interval 552-574 (AGYKPDEGKRGDACEGDSGGPFV) is high affinity receptor-binding region which also known as the TP508 peptide. The active-site Charge relay system is the S569.

It belongs to the peptidase S1 family. As to quaternary structure, heterodimer (named alpha-thrombin) of a light and a heavy chain; disulfide-linked. Forms a heterodimer with SERPINA5. In plasma, interacts (via N-terminus) with alpha-1-microglobulin; this interaction does not prevent the activation of prothrombin to thrombin. The gamma-carboxyglutamyl residues, which bind calcium ions, result from the carboxylation of glutamyl residues by a microsomal enzyme, the vitamin K-dependent carboxylase. The modified residues are necessary for the calcium-dependent interaction with a negatively charged phospholipid surface, which is essential for the conversion of prothrombin to thrombin. Post-translationally, in the penultimate step of the coagulation cascade, prothrombin is converted to thrombin by the prothrombinase complex composed of factor Xa (F10), cofactor Va (F5), and phospholipids. This activation requires factor Xa-catalyzed sequential cleavage at 2 sites, Arg-315 and Arg-364, along 2 possible pathways. In the first pathway, the first cleavage occurs at Arg-315, leading to the formation of the inactive intermediate prethrombin-2. This pathway preferentially occurs on platelets and in the absence of cofactor Va. In the second pathway, the first cleavage occurs at Arg-364, which separates protease domain into 2 chains that remain connected through a disulfide bond and generates the active intermediate meizothrombin. The presence of cofactor Va directs activation along the meizothrombin pathway and greatly accelerates the rate of cleavage at Arg-364, but has a smaller effect on the cleavage of meizothrombin at Arg-315. Meizothrombin accumulates as an intermediate when prothrombinase is assembled on the membrane of red blood cells.

The catalysed reaction is Selective cleavage of Arg-|-Gly bonds in fibrinogen to form fibrin and release fibrinopeptides A and B.. With respect to regulation, activity is promoted in the presence of negatively charged surfaces, such as polyphosphate and dextran sulfate. Inhibited by SERPINA5. In terms of biological role, thrombin, which cleaves bonds after Arg and Lys, converts fibrinogen to fibrin and activates factors V, VII, VIII, XIII, and, in complex with thrombomodulin, protein C. Functions in blood homeostasis, inflammation and wound healing. Activates coagulation factor XI (F11); activation is promoted by the contact with negatively charged surfaces. Triggers the production of pro-inflammatory cytokines, such as MCP-1/CCL2 and IL8/CXCL8, in endothelial cells. The chain is Prothrombin (F2) from Pongo abelii (Sumatran orangutan).